A 351-amino-acid polypeptide reads, in one-letter code: Uroporphyrinogen decarboxylase (351 aa).

Substrate-binding positions include 25–29 (RQAGR), D74, Y151, S206, and H325.

Belongs to the uroporphyrinogen decarboxylase family. Homodimer.

It localises to the cytoplasm. The catalysed reaction is uroporphyrinogen III + 4 H(+) = coproporphyrinogen III + 4 CO2. It functions in the pathway porphyrin-containing compound metabolism; protoporphyrin-IX biosynthesis; coproporphyrinogen-III from 5-aminolevulinate: step 4/4. Its function is as follows. Catalyzes the decarboxylation of four acetate groups of uroporphyrinogen-III to yield coproporphyrinogen-III. The polypeptide is Uroporphyrinogen decarboxylase (Chlorobium phaeobacteroides (strain BS1)).